The chain runs to 140 residues: Small ribosomal subunit protein uS12m (140 aa).

The protein belongs to the universal ribosomal protein uS12 family.

It localises to the mitochondrion. In Dictyostelium citrinum (Slime mold), this protein is Small ribosomal subunit protein uS12m (mrps12).